Consider the following 292-residue polypeptide: NAC domain-containing protein 96 (292 aa).

Residues 6 to 158 (LPPGFRFHPT…AFVLCRVAMK (153 aa)) form the NAC domain. The DNA-binding element occupies 106 to 164 (IGYRKTLVFYKGRAPLGDRSNWIMHEYRLCDDDTSQGSQNLKGAFVLCRVAMKNEIKTN). The disordered stretch occupies residues 171-199 (PSEQTIGSGESSGLSSRVTSPSRDETMPF). Residues 172–191 (SEQTIGSGESSGLSSRVTSP) show a composition bias toward polar residues.

As to quaternary structure, interacts with ABF2 and ABF4. Expressed in roots, rosettes leaves, cauline leaves and stems.

The protein resides in the nucleus. Transcriptional activator involved in the positive regulation of abscisic acid (ABA) responsive genes. Acts as a positive factor of ABA-mediated responses. Involved in the transcriptional activation of ABA-inducible genes in response to dehydration and osmotic stresses. Plays a positive role in both stomatal closure and water loss under dehydration stress conditions. Acts synergistically with ABF2 to activate the dehydration stress-response factor RD29A transcription. Binds to the consensus core cis-acting elements 5'-CGTA-3' and 5'-CACG-3' at the RD29A promoter. Involved in hypocotyl graft union formation. Required for the auxin-mediated promotion of vascular tissue proliferation during hypocotyl graft attachment. This is NAC domain-containing protein 96 from Arabidopsis thaliana (Mouse-ear cress).